Consider the following 228-residue polypeptide: PKHD-type hydroxylase XAC2942 (228 aa).

One can recognise a Fe2OG dioxygenase domain in the interval arginine 78 to serine 180. Positions 96, 98, and 161 each coordinate Fe cation. Arginine 171 is a binding site for 2-oxoglutarate.

Fe(2+) is required as a cofactor. Requires L-ascorbate as cofactor.

The protein is PKHD-type hydroxylase XAC2942 of Xanthomonas axonopodis pv. citri (strain 306).